Reading from the N-terminus, the 310-residue chain is Probable manganese-dependent inorganic pyrophosphatase (310 aa).

Residues His9, Asp13, Asp15, Asp76, His98, and Asp150 each contribute to the Mn(2+) site.

Belongs to the PPase class C family. Requires Mn(2+) as cofactor.

The protein localises to the cytoplasm. The enzyme catalyses diphosphate + H2O = 2 phosphate + H(+). This chain is Probable manganese-dependent inorganic pyrophosphatase, found in Streptococcus thermophilus (strain ATCC BAA-491 / LMD-9).